A 607-amino-acid chain; its full sequence is Albumin B (607 aa).

The signal sequence occupies residues 1 to 18; the sequence is MKWITLICLLISSSFIES. The propeptide occupies 19–24; it reads RILFKR. 3 Albumin domains span residues 22-209, 210-402, and 403-600; these read FKRD…KQLM, KQSH…RFMN, and EAKE…VLIE. H30 serves as a coordination point for Cu cation. 17 disulfide bridges follow: C80–C88, C101–C117, C116–C127, C147–C192, C191–C200, C223–C269, C268–C276, C288–C302, C301–C312, C339–C384, C383–C392, C415–C461, C460–C471, C484–C500, C499–C510, C537–C582, and C581–C590.

The protein belongs to the ALB/AFP/VDB family. As to expression, plasma.

The protein localises to the secreted. Its function is as follows. Serum albumin, the main protein of plasma, has a good binding capacity for water, Ca(2+), Na(+), K(+), fatty acids, hormones, bilirubin and drugs. Its main function is the regulation of the colloidal osmotic pressure of blood. This chain is Albumin B (alb-b), found in Xenopus laevis (African clawed frog).